Here is a 274-residue protein sequence, read N- to C-terminus: 3-methyl-2-oxobutanoate hydroxymethyltransferase (274 aa).

D49 and D88 together coordinate Mg(2+). Residues 49–50 (DS), D88, and K118 contribute to the 3-methyl-2-oxobutanoate site. A Mg(2+)-binding site is contributed by E120. The active-site Proton acceptor is E187.

This sequence belongs to the PanB family. In terms of assembly, homodecamer; pentamer of dimers. Requires Mg(2+) as cofactor.

The protein resides in the cytoplasm. It carries out the reaction 3-methyl-2-oxobutanoate + (6R)-5,10-methylene-5,6,7,8-tetrahydrofolate + H2O = 2-dehydropantoate + (6S)-5,6,7,8-tetrahydrofolate. It functions in the pathway cofactor biosynthesis; (R)-pantothenate biosynthesis; (R)-pantoate from 3-methyl-2-oxobutanoate: step 1/2. Its function is as follows. Catalyzes the reversible reaction in which hydroxymethyl group from 5,10-methylenetetrahydrofolate is transferred onto alpha-ketoisovalerate to form ketopantoate. The chain is 3-methyl-2-oxobutanoate hydroxymethyltransferase from Paramagnetospirillum magneticum (strain ATCC 700264 / AMB-1) (Magnetospirillum magneticum).